We begin with the raw amino-acid sequence, 111 residues long: Universal stress protein B (111 aa).

2 consecutive transmembrane segments (helical) span residues 1–21 (MIST…NMAR) and 90–110 (FILT…LMIW).

Belongs to the universal stress protein B family.

It is found in the cell inner membrane. The protein is Universal stress protein B of Klebsiella pneumoniae (strain 342).